Consider the following 363-residue polypeptide: MPHSYPALSAEQKKELSDIALRIVAPGKGILAADESVGSMAKRLSQIGVENTEENRRLYRQVLFSADDRVKKCIGGVIFFHETLYQKDDNGVPFVRTIQEKGILVGIKVDKGVVPLAGTDGETTTQGLDGLLERCAQYKKDGADFAKWRCVLKISDRTPSALAILENANVLARYASICQQNGIVPIVEPEILPDGDHDLKRCQFVTEKVLAAVYKALSDHHVYLEGTLLKPNMVTPGHACPIKYSPEEIAMATVTALRRTVPPAVPGVTFLSGGQSEEEASLNLNAINRCSLPRPWALTFSYGRALQASALSAWRGQRDNAGAATEEFIKRAEMNGLAAQGKYEGSGDGGAAAQSLYVANHAY.

Position 5 is a phosphotyrosine (tyrosine 5). Serine 36, serine 39, and serine 45 each carry phosphoserine. Arginine 56 serves as a coordination point for substrate. Lysine 111 is modified (N6-acetyllysine). Substrate is bound at residue lysine 147. Glutamate 188 serves as the catalytic Proton acceptor. Lysine 230 functions as the Schiff-base intermediate with dihydroxyacetone-P in the catalytic mechanism.

This sequence belongs to the class I fructose-bisphosphate aldolase family. Homotetramer. Interacts with ATP6V1E1. As to expression, high expression in the adult brain.

It catalyses the reaction beta-D-fructose 1,6-bisphosphate = D-glyceraldehyde 3-phosphate + dihydroxyacetone phosphate. Its pathway is carbohydrate degradation; glycolysis; D-glyceraldehyde 3-phosphate and glycerone phosphate from D-glucose: step 4/4. The protein is Fructose-bisphosphate aldolase C (Aldoc) of Rattus norvegicus (Rat).